Reading from the N-terminus, the 202-residue chain is MTTLMGKFKLTGRSPLFVLQPMLHCKKQQFVEEAVRLISNKKIGKKSDFVQARNWVGALNVTGLPLNQFILRYDRASGPGGQNVNKVNSKCTLTLSGLSNCAWIPQEVRNILSSGRFRYYAKGSDSIVIQSDETRSRETNKLKCFEKLVQEIRQTCQFPNDTTAETSKKWNKIKEKANKERLLDKKVHSDKKKNRSKIKFNY.

This is an uncharacterized protein from Saccharomyces cerevisiae (strain ATCC 204508 / S288c) (Baker's yeast).